Consider the following 311-residue polypeptide: Lipoyl synthase (311 aa).

Cysteine 47, cysteine 52, cysteine 58, cysteine 73, cysteine 77, cysteine 80, and serine 286 together coordinate [4Fe-4S] cluster. The Radical SAM core domain maps to 59–276 (WSRHTATYLA…RSVGESLGLF (218 aa)).

This sequence belongs to the radical SAM superfamily. Lipoyl synthase family. It depends on [4Fe-4S] cluster as a cofactor.

The protein localises to the cytoplasm. The enzyme catalyses [[Fe-S] cluster scaffold protein carrying a second [4Fe-4S](2+) cluster] + N(6)-octanoyl-L-lysyl-[protein] + 2 oxidized [2Fe-2S]-[ferredoxin] + 2 S-adenosyl-L-methionine + 4 H(+) = [[Fe-S] cluster scaffold protein] + N(6)-[(R)-dihydrolipoyl]-L-lysyl-[protein] + 4 Fe(3+) + 2 hydrogen sulfide + 2 5'-deoxyadenosine + 2 L-methionine + 2 reduced [2Fe-2S]-[ferredoxin]. It participates in protein modification; protein lipoylation via endogenous pathway; protein N(6)-(lipoyl)lysine from octanoyl-[acyl-carrier-protein]: step 2/2. Its function is as follows. Catalyzes the radical-mediated insertion of two sulfur atoms into the C-6 and C-8 positions of the octanoyl moiety bound to the lipoyl domains of lipoate-dependent enzymes, thereby converting the octanoylated domains into lipoylated derivatives. The chain is Lipoyl synthase from Chlamydia trachomatis serovar D (strain ATCC VR-885 / DSM 19411 / UW-3/Cx).